The primary structure comprises 60 residues: Conotoxin PnMRCL-022 (60 aa).

A signal peptide spans 1–22 (MRCLPVFVILLLLIASTPSVNA). The propeptide occupies 23–45 (RPKTKDLASFHDNAKRTQHIFWS).

Belongs to the conotoxin T superfamily. Contains 2 disulfide bonds that can be either 'C1-C3, C2-C4' or 'C1-C4, C2-C3', since these disulfide connectivities have been observed for conotoxins with cysteine framework V (for examples, see AC P0DQQ7 and AC P81755). As to expression, expressed by the venom duct.

It localises to the secreted. The sequence is that of Conotoxin PnMRCL-022 from Conus pennaceus (Feathered cone).